The following is a 518-amino-acid chain: GMP synthase [glutamine-hydrolyzing] (518 aa).

The Glutamine amidotransferase type-1 domain occupies arginine 6–aspartate 200. The active-site Nucleophile is cysteine 84. Residues histidine 175 and glutamate 177 contribute to the active site. Residues tryptophan 201–arginine 393 enclose the GMPS ATP-PPase domain. Serine 228–serine 234 is an ATP binding site.

Homodimer.

The enzyme catalyses XMP + L-glutamine + ATP + H2O = GMP + L-glutamate + AMP + diphosphate + 2 H(+). Its pathway is purine metabolism; GMP biosynthesis; GMP from XMP (L-Gln route): step 1/1. Catalyzes the synthesis of GMP from XMP. This chain is GMP synthase [glutamine-hydrolyzing], found in Cereibacter sphaeroides (strain ATCC 17025 / ATH 2.4.3) (Rhodobacter sphaeroides).